The following is a 184-amino-acid chain: ATP synthase subunit b (184 aa).

The helical transmembrane segment at Ile-24–Pro-44 threads the bilayer.

It belongs to the ATPase B chain family. In terms of assembly, F-type ATPases have 2 components, F(1) - the catalytic core - and F(0) - the membrane proton channel. F(1) has five subunits: alpha(3), beta(3), gamma(1), delta(1), epsilon(1). F(0) has three main subunits: a(1), b(2) and c(10-14). The alpha and beta chains form an alternating ring which encloses part of the gamma chain. F(1) is attached to F(0) by a central stalk formed by the gamma and epsilon chains, while a peripheral stalk is formed by the delta and b chains.

Its subcellular location is the cell membrane. Functionally, f(1)F(0) ATP synthase produces ATP from ADP in the presence of a proton or sodium gradient. F-type ATPases consist of two structural domains, F(1) containing the extramembraneous catalytic core and F(0) containing the membrane proton channel, linked together by a central stalk and a peripheral stalk. During catalysis, ATP synthesis in the catalytic domain of F(1) is coupled via a rotary mechanism of the central stalk subunits to proton translocation. Its function is as follows. Component of the F(0) channel, it forms part of the peripheral stalk, linking F(1) to F(0). This Micrococcus luteus (strain ATCC 4698 / DSM 20030 / JCM 1464 / CCM 169 / CCUG 5858 / IAM 1056 / NBRC 3333 / NCIMB 9278 / NCTC 2665 / VKM Ac-2230) (Micrococcus lysodeikticus) protein is ATP synthase subunit b (atpF).